The primary structure comprises 1073 residues: Serine/threonine-protein kinase 11-interacting protein (1073 aa).

LRR repeat units follow at residues 166–187, 189–210, 212–233, 236–257, 258–279, and 283–304; these read ELQT…LQLL, ALRV…LTTL, ELEY…GIFS, KLLT…EQLV, NLQH…APLS, and YLKK…RSAT. Disordered stretches follow at residues 389–409, 455–533, 724–817, and 834–859; these read VKVR…SQAL, SRSA…EKPE, EVSS…QGMK, and MGSY…SEET. Acidic residues predominate over residues 515–532; the sequence is REEEADELMLGEEEDEKP. 2 stretches are compositionally biased toward polar residues: residues 779 to 788 and 843 to 859; these read MDTSNSTRTP and RGPT…SEET.

It belongs to the STK11IP family.

It is found in the cytoplasm. The polypeptide is Serine/threonine-protein kinase 11-interacting protein (STK11IP) (Gallus gallus (Chicken)).